We begin with the raw amino-acid sequence, 211 residues long: ATP phosphoribosyltransferase (211 aa).

This sequence belongs to the ATP phosphoribosyltransferase family. Short subfamily. Heteromultimer composed of HisG and HisZ subunits.

The protein localises to the cytoplasm. It catalyses the reaction 1-(5-phospho-beta-D-ribosyl)-ATP + diphosphate = 5-phospho-alpha-D-ribose 1-diphosphate + ATP. Its pathway is amino-acid biosynthesis; L-histidine biosynthesis; L-histidine from 5-phospho-alpha-D-ribose 1-diphosphate: step 1/9. Functionally, catalyzes the condensation of ATP and 5-phosphoribose 1-diphosphate to form N'-(5'-phosphoribosyl)-ATP (PR-ATP). Has a crucial role in the pathway because the rate of histidine biosynthesis seems to be controlled primarily by regulation of HisG enzymatic activity. This is ATP phosphoribosyltransferase from Pseudomonas aeruginosa (strain UCBPP-PA14).